Here is a 638-residue protein sequence, read N- to C-terminus: Neuroendocrine convertase 2 (638 aa).

The first 25 residues, 1-25, serve as a signal peptide directing secretion; sequence MRGGCISQGKAAAGLLFCVMVFASA. The propeptide occupies 26-109; sequence ERPVFTNHFL…QQEGFNRKKR (84 aa). The region spanning 129–453 is the Peptidase S8 domain; it reads QWYLINTGQA…YGVLDAGAMV (325 aa). Residues Asp167 and His208 each act as charge relay system in the active site. 2 disulfide bridges follow: Cys225–Cys376 and Cys317–Cys347. Residue Asn375 is glycosylated (N-linked (GlcNAc...) asparagine). The active-site Charge relay system is Ser384. The 137-residue stretch at 461-597 folds into the P/Homo B domain; it reads TVPERFHCVG…TLMLHGTQSA (137 aa). Cys468 and Cys494 form a disulfide bridge. Asn514 and Asn524 each carry an N-linked (GlcNAc...) asparagine glycan.

It belongs to the peptidase S8 family. Furin subfamily.

It localises to the cytoplasmic vesicle. The protein localises to the secretory vesicle. Its subcellular location is the secreted. The catalysed reaction is Release of protein hormones and neuropeptides from their precursors, generally by hydrolysis of -Lys-Arg-|- bonds.. Functionally, serine endopeptidase which is involved in the processing of hormone and other protein precursors at sites comprised of pairs of basic amino acid residues. Responsible for the release of glucagon from proglucagon in pancreatic A cells. The protein is Neuroendocrine convertase 2 (PCSK2) of Bos taurus (Bovine).